The chain runs to 256 residues: Phosphomannomutase (256 aa).

Asp12 (nucleophile) is an active-site residue. Mg(2+) contacts are provided by Asp12 and Asp14. Catalysis depends on Asp14, which acts as the Proton donor/acceptor. Positions 21, 123, 134, 141, 179, and 181 each coordinate alpha-D-mannose 1-phosphate. Residue Asp209 participates in Mg(2+) binding.

It belongs to the eukaryotic PMM family. In terms of assembly, homodimer.

The protein localises to the cytoplasm. The catalysed reaction is alpha-D-mannose 1-phosphate = D-mannose 6-phosphate. It participates in nucleotide-sugar biosynthesis; GDP-alpha-D-mannose biosynthesis; alpha-D-mannose 1-phosphate from D-fructose 6-phosphate: step 2/2. Its function is as follows. Involved in the synthesis of the GDP-mannose and dolichol-phosphate-mannose required for a number of critical mannosyl transfer reactions. In Encephalitozoon cuniculi (strain GB-M1) (Microsporidian parasite), this protein is Phosphomannomutase (SEC53).